Reading from the N-terminus, the 133-residue chain is Ribosomal silencing factor RsfS (133 aa).

The protein belongs to the Iojap/RsfS family. Interacts with ribosomal protein uL14 (rplN).

The protein resides in the cytoplasm. Functions as a ribosomal silencing factor. Interacts with ribosomal protein uL14 (rplN), blocking formation of intersubunit bridge B8. Prevents association of the 30S and 50S ribosomal subunits and the formation of functional ribosomes, thus repressing translation. The sequence is that of Ribosomal silencing factor RsfS from Zymomonas mobilis subsp. mobilis (strain ATCC 31821 / ZM4 / CP4).